Consider the following 156-residue polypeptide: Putative pre-16S rRNA nuclease (156 aa).

This sequence belongs to the YqgF nuclease family.

The protein localises to the cytoplasm. Functionally, could be a nuclease involved in processing of the 5'-end of pre-16S rRNA. The sequence is that of Putative pre-16S rRNA nuclease from Gloeobacter violaceus (strain ATCC 29082 / PCC 7421).